Consider the following 2376-residue polypeptide: Serine/threonine-protein kinase WNK1 (2376 aa).

2 disordered regions span residues 1–78 (MSGG…EHRF) and 93–201 (ELPG…QQDD). Composition is skewed to low complexity over residues 10-19 (SSPPGSLFLS) and 40-49 (GAAAADAGAG). A phosphoserine mark is found at serine 15 and serine 19. The segment covering 50–66 (RTEEYRRRRHTMDKDSR) has biased composition (basic and acidic residues). Phosphothreonine is present on threonine 60. The segment covering 125-158 (TPAVAHVAQQPPAAATPGEPAAAVPAAASAPGSA) has biased composition (low complexity). Serine 172 carries the post-translational modification Phosphoserine. The Protein kinase domain occupies 219–477 (LKFDIEIGRG…IKDLLNHAFF (259 aa)). ATP is bound at residue serine 229. Chloride contacts are provided by phenylalanine 281 and leucine 297. ATP is bound by residues 299 to 302 (TELM) and lysine 349. Aspartate 366 serves as the catalytic Proton acceptor. Chloride is bound by residues leucine 367 and leucine 369. Residues serine 376 and serine 380 each carry the phosphoserine; by autocatalysis modification. Residues 486 to 553 (ELAEEDDGEK…VCEGDHKTMA (68 aa)) are autoinhibitory domain. The span at 571 to 586 (QLVREEQEKRKQEESS) shows a compositional bias: basic and acidic residues. 3 disordered regions span residues 571–641 (QLVR…QLQY), 701–799 (AQPH…PVPT), and 1026–1118 (TTSS…SRPK). Composition is skewed to low complexity over residues 587–601 (LKQQ…SQAG) and 614–624 (AAATTSASVST). Residues 627–637 (EPEEPEADQHQ) are interaction with KLHL3. The segment covering 708–752 (PPSSMAQGQSQGQPSSSSLTGIPSSQPVQHSQQQQGVQQTAPSQQ) has biased composition (low complexity). The segment covering 753 to 766 (TVQYSLPQTSAPSE) has biased composition (polar residues). Positions 1045 to 1057 (PPEPVPAAPPQPT) are enriched in pro residues. The segment covering 1079 to 1089 (SDGNENVPSSS) has biased composition (polar residues). Residues 1097 to 1118 (IKRHYRKSVRSRSRHEKTSRPK) are compositionally biased toward basic residues. An RFXV motif 1 motif is present at residues 1257–1260 (RFIV). Serine 1261 is subject to Phosphoserine. Disordered stretches follow at residues 1459 to 1478 (STAA…VSGS) and 1734 to 1770 (STIP…PPSE). A compositionally biased stretch (pro residues) spans 1746-1756 (SKPPSTKPPVL). The RFXV motif 2 motif lies at 1853–1856 (RFQV). Residues 1862–1878 (DTQKEGKNKSEDVKSVH) are compositionally biased toward basic and acidic residues. The segment at 1862 to 1942 (DTQKEGKNKS…QPTKVGRFQV (81 aa)) is disordered. The span at 1881–1899 (SSTSESSVLSSSSPESTLV) shows a compositional bias: low complexity. 2 consecutive short sequence motifs (RFXV motif) follow at residues 1939–1942 (RFQV) and 1951–1954 (RFSV). Phosphoserine occurs at positions 1972, 1996, 2005, 2006, 2021, 2023, and 2026. Disordered regions lie at residues 1991–2033 (EKPE…LCSK) and 2110–2239 (AAAP…RKGT). The segment covering 2116–2128 (GRRRRPTKSKGSK) has biased composition (basic residues). A compositionally biased stretch (low complexity) spans 2129–2141 (SSRSSSLGNKSPG). 2 stretches are compositionally biased toward polar residues: residues 2146–2161 (LSGQ…QQTL) and 2169–2193 (ETGQ…SAFT). A compositionally biased stretch (low complexity) spans 2207-2223 (GQGTSSTNTVGGTVSSQ). Residues 2224–2238 (AAQAQPPTMTSSRKG) are compositionally biased toward polar residues. The tract at residues 2235–2255 (SRKGTFTDDLHKLVDNWARDA) is amphipathic alpha-helix. 4 positions are modified to phosphoserine: serine 2264, serine 2280, serine 2364, and serine 2366.

Belongs to the protein kinase superfamily. Ser/Thr protein kinase family. WNK subfamily. In terms of assembly, interacts with WNK3. Interacts with WNK4; inhibiting the activity of WNK4. Interacts with SGK1; promoting its activation. Associates with the mTORC2 complex. Interacts with UVRAG. Interacts (via amphipathic alpha-helix region) with EMC2; promoting the ER membrane protein complex assembly. It depends on Mg(2+) as a cofactor. In terms of processing, autophosphorylated at Ser-376 and Ser-380, promoting its activity. Autophosphorylation at Ser-380 is inhibited by intracellular calcium. Phosphorylation at Thr-60 increases ability to activate SGK1. Post-translationally, ubiquitinated by the BCR(KLHL3) complex, leading to its degradation. Also ubiquitinated by the BCR(KLHL2) complex.

It localises to the cytoplasm. The protein localises to the nucleus. Its subcellular location is the cytoskeleton. The protein resides in the spindle. The catalysed reaction is L-seryl-[protein] + ATP = O-phospho-L-seryl-[protein] + ADP + H(+). It catalyses the reaction L-threonyl-[protein] + ATP = O-phospho-L-threonyl-[protein] + ADP + H(+). Its activity is regulated as follows. Activated in response to hyperosmotic stress: cell shrinkage promotes formation of a membraneless compartment that concentrates WNK1 with its substrates, OXSR1/OSR1 and STK39/SPAK. Activation requires autophosphorylation of Ser-380 and, to a lower extent, Ser-376. Autophosphorylation and subsequent activation is inhibited by increases in intracellular ionic strength: Cl(-) potently inhibits WNK1 kinase activity via direct binding. Also inhibited by K(+) ions. Functionally, serine/threonine-protein kinase component of the WNK1-SPAK/OSR1 kinase cascade, which acts as a key regulator of blood pressure and regulatory volume increase by promoting ion influx. WNK1 mediates regulatory volume increase in response to hyperosmotic stress by acting as a molecular crowding sensor, which senses cell shrinkage and mediates formation of a membraneless compartment by undergoing liquid-liquid phase separation. The membraneless compartment concentrates WNK1 with its substrates, OXSR1/OSR1 and STK39/SPAK, promoting WNK1-dependent phosphorylation and activation of downstream kinases OXSR1/OSR1 and STK39/SPAK. Following activation, OXSR1/OSR1 and STK39/SPAK catalyze phosphorylation of ion cotransporters SLC12A1/NKCC2, SLC12A2/NKCC1, SLC12A5/KCC2 and SLC12A6/KCC3, regulating their activity. Phosphorylation of Na-K-Cl cotransporters SLC12A2/NKCC1 and SLC12A2/NKCC1 promote their activation and ion influx; simultaneously, phosphorylation of K-Cl cotransporters SLC12A5/KCC2 and SLC12A6/KCC3 inhibit their activity, blocking ion efflux. Also acts as a regulator of angiogenesis in endothelial cells via activation of OXSR1/OSR1 and STK39/SPAK: activation of OXSR1/OSR1 regulates chemotaxis and invasion, while STK39/SPAK regulates endothelial cell proliferation. Also acts independently of the WNK1-SPAK/OSR1 kinase cascade by catalyzing phosphorylation of other substrates, such as SYT2, PCF11 and NEDD4L. Mediates phosphorylation of SYT2, regulating SYT2 association with phospholipids and membrane-binding. Regulates mRNA export in the nucleus by mediating phosphorylation of PCF11, thereby decreasing the association between PCF11 and POLR2A/RNA polymerase II and promoting mRNA export to the cytoplasm. Acts as a negative regulator of autophagy. Required for the abscission step during mitosis, independently of the WNK1-SPAK/OSR1 kinase cascade. May also play a role in actin cytoskeletal reorganization. Also acts as a scaffold protein independently of its protein kinase activity: negatively regulates cell membrane localization of various transporters and channels, such as SLC4A4, SLC26A6, SLC26A9, TRPV4 and CFTR. Involved in the regulation of epithelial Na(+) channel (ENaC) by promoting activation of SGK1 in a kinase-independent manner: probably acts as a scaffold protein that promotes the recruitment of SGK1 to the mTORC2 complex in response to chloride, leading to mTORC2-dependent phosphorylation and activation of SGK1. Acts as an assembly factor for the ER membrane protein complex independently of its protein kinase activity: associates with EMC2 in the cytoplasm via its amphipathic alpha-helix, and prevents EMC2 ubiquitination and subsequent degradation, thereby promoting EMC2 stabilization. The protein is Serine/threonine-protein kinase WNK1 of Sus scrofa (Pig).